Consider the following 275-residue polypeptide: Glutamate racemase (275 aa).

Residues 10-11 (DS) and 42-43 (YG) each bind substrate. Catalysis depends on C74, which acts as the Proton donor/acceptor. 75-76 (NT) serves as a coordination point for substrate. C189 acts as the Proton donor/acceptor in catalysis. 190 to 191 (TH) contributes to the substrate binding site.

It belongs to the aspartate/glutamate racemases family.

It carries out the reaction L-glutamate = D-glutamate. The protein operates within cell wall biogenesis; peptidoglycan biosynthesis. Functionally, provides the (R)-glutamate required for cell wall biosynthesis. The polypeptide is Glutamate racemase (Bartonella tribocorum (strain CIP 105476 / IBS 506)).